The chain runs to 128 residues: uncharacterized protein (128 aa).

A run of 4 helical transmembrane segments spans residues Ile-5–Met-25, Pro-27–Leu-47, Gln-60–Leu-80, and Ser-87–Phe-107. The region spanning Leu-9–Lys-110 is the EamA domain.

It localises to the cell membrane. This is an uncharacterized protein from Haemophilus influenzae (strain ATCC 51907 / DSM 11121 / KW20 / Rd).